Here is an 85-residue protein sequence, read N- to C-terminus: Small cysteine and glycine repeat-containing protein 5 (85 aa).

Positions 4–69 are 10 X 2 AA repeats of CG; sequence CGCGGCGGCG…TCCSCGCGCG (66 aa).

Belongs to the KRTAP type 28 family.

In terms of biological role, in the hair cortex, hair keratin intermediate filaments are embedded in an interfilamentous matrix, consisting of hair keratin-associated proteins (KRTAP), which are essential for the formation of a rigid and resistant hair shaft through their extensive disulfide bond cross-linking with abundant cysteine residues of hair keratins. The matrix proteins include the high-sulfur and high-glycine-tyrosine keratins. In Homo sapiens (Human), this protein is Small cysteine and glycine repeat-containing protein 5.